Reading from the N-terminus, the 594-residue chain is UvrABC system protein C (594 aa).

The region spanning D14 to V91 is the GIY-YIG domain. In terms of domain architecture, UVR spans S196–V231.

Belongs to the UvrC family. As to quaternary structure, interacts with UvrB in an incision complex.

It localises to the cytoplasm. In terms of biological role, the UvrABC repair system catalyzes the recognition and processing of DNA lesions. UvrC both incises the 5' and 3' sides of the lesion. The N-terminal half is responsible for the 3' incision and the C-terminal half is responsible for the 5' incision. This chain is UvrABC system protein C, found in Shouchella clausii (strain KSM-K16) (Alkalihalobacillus clausii).